The chain runs to 449 residues: UDP-N-acetylmuramoylalanine--D-glutamate ligase (449 aa).

118–124 (GTNGKTT) is an ATP binding site.

Belongs to the MurCDEF family.

It localises to the cytoplasm. It carries out the reaction UDP-N-acetyl-alpha-D-muramoyl-L-alanine + D-glutamate + ATP = UDP-N-acetyl-alpha-D-muramoyl-L-alanyl-D-glutamate + ADP + phosphate + H(+). It participates in cell wall biogenesis; peptidoglycan biosynthesis. In terms of biological role, cell wall formation. Catalyzes the addition of glutamate to the nucleotide precursor UDP-N-acetylmuramoyl-L-alanine (UMA). This is UDP-N-acetylmuramoylalanine--D-glutamate ligase from Staphylococcus haemolyticus (strain JCSC1435).